We begin with the raw amino-acid sequence, 435 residues long: Tryptophan synthase beta chain (435 aa).

Position 92 is an N6-(pyridoxal phosphate)lysine (Lys92).

This sequence belongs to the TrpB family. Tetramer of two alpha and two beta chains. Requires pyridoxal 5'-phosphate as cofactor.

The catalysed reaction is (1S,2R)-1-C-(indol-3-yl)glycerol 3-phosphate + L-serine = D-glyceraldehyde 3-phosphate + L-tryptophan + H2O. Its pathway is amino-acid biosynthesis; L-tryptophan biosynthesis; L-tryptophan from chorismate: step 5/5. Its function is as follows. The beta subunit is responsible for the synthesis of L-tryptophan from indole and L-serine. The chain is Tryptophan synthase beta chain from Albidiferax ferrireducens (strain ATCC BAA-621 / DSM 15236 / T118) (Rhodoferax ferrireducens).